The following is a 154-amino-acid chain: MSELPVVSIFTDGACSGNPGPGGWGAILRFGDKEKELKGGEPHTTNNRMELMAAISALEALKKSCQVELYTDSQYVRQGITGWIHGWKRNGWKTADKKPVKNAELWQRLDAALKPHKINWHWVKGHAGHPENERADQLARDGVAMARMQKNVRS.

The region spanning 3 to 144 is the RNase H type-1 domain; sequence ELPVVSIFTD…ADQLARDGVA (142 aa). Mg(2+) contacts are provided by Asp12, Glu50, Asp72, and Asp136.

Belongs to the RNase H family. Monomer. Mg(2+) serves as cofactor.

It localises to the cytoplasm. It carries out the reaction Endonucleolytic cleavage to 5'-phosphomonoester.. Its function is as follows. Endonuclease that specifically degrades the RNA of RNA-DNA hybrids. The sequence is that of Ribonuclease H from Bradyrhizobium sp. (strain ORS 278).